Reading from the N-terminus, the 389-residue chain is Galactokinase (389 aa).

Position 34 to 37 (34 to 37 (EHTD)) interacts with substrate. Residues serine 68 and 125–131 (GSGLSSS) each bind ATP. 2 residues coordinate Mg(2+): serine 131 and glutamate 163. Catalysis depends on aspartate 175, which acts as the Proton acceptor. Residue tyrosine 225 participates in substrate binding.

This sequence belongs to the GHMP kinase family. GalK subfamily.

The protein resides in the cytoplasm. The catalysed reaction is alpha-D-galactose + ATP = alpha-D-galactose 1-phosphate + ADP + H(+). Its pathway is carbohydrate metabolism; galactose metabolism. Its function is as follows. Catalyzes the transfer of the gamma-phosphate of ATP to D-galactose to form alpha-D-galactose-1-phosphate (Gal-1-P). In Clostridium beijerinckii (strain ATCC 51743 / NCIMB 8052) (Clostridium acetobutylicum), this protein is Galactokinase.